Consider the following 473-residue polypeptide: Photosystem II CP43 reaction center protein (473 aa).

Positions 1-14 (MKILYSLRRFYHVE) are excised as a propeptide. Position 15 is an N-acetylthreonine (Thr-15). Thr-15 carries the phosphothreonine modification. A run of 5 helical transmembrane segments spans residues 69–93 (LFEVAHFVPEKPMYEQGLILLPHLA), 134–155 (LLGPETLEESFPFFGYVWQDRN), 178–200 (KALYFGGVYDTWAPGGGDVRKIT), 255–275 (KPFAWARRAFVWSGEAYLSYS), and 291–312 (WFNNTAYPSEFYGPTGPEASQA). Glu-367 provides a ligand contact to [CaMn4O5] cluster. The helical transmembrane segment at 447 to 471 (RARAAAAGFEKGIDRDLEPVVYMTP) threads the bilayer.

This sequence belongs to the PsbB/PsbC family. PsbC subfamily. PSII is composed of 1 copy each of membrane proteins PsbA, PsbB, PsbC, PsbD, PsbE, PsbF, PsbH, PsbI, PsbJ, PsbK, PsbL, PsbM, PsbT, PsbX, PsbY, PsbZ, Psb30/Ycf12, at least 3 peripheral proteins of the oxygen-evolving complex and a large number of cofactors. It forms dimeric complexes. It depends on Binds multiple chlorophylls and provides some of the ligands for the Ca-4Mn-5O cluster of the oxygen-evolving complex. It may also provide a ligand for a Cl- that is required for oxygen evolution. PSII binds additional chlorophylls, carotenoids and specific lipids. as a cofactor. Post-translationally, phosphorylated in both bundle sheath and mesophyll cells, phosphorylation increases when cells are grown under high rather than low light regimes (70 vs 900 umol photons/m-2/s).

Its subcellular location is the plastid. The protein resides in the chloroplast thylakoid membrane. Functionally, one of the components of the core complex of photosystem II (PSII). It binds chlorophyll and helps catalyze the primary light-induced photochemical processes of PSII. PSII is a light-driven water:plastoquinone oxidoreductase, using light energy to abstract electrons from H(2)O, generating O(2) and a proton gradient subsequently used for ATP formation. This is Photosystem II CP43 reaction center protein from Zea mays (Maize).